Consider the following 189-residue polypeptide: Putative ankyrin repeat protein TV1425 (189 aa).

ANK repeat units lie at residues 31–60, 64–93, 97–126, and 130–159; these read YNRTPLMVACMLGMENAIDKLVENFDKLED, EGSTALIWAVKNNRLGIAEKLLSKGSNVNT, SGKTPLMWSIIFGYSEMSYFLLEHGANVND, and EGETPLIVASKYGRSEIVKKLLELGADISA.

The chain is Putative ankyrin repeat protein TV1425 from Thermoplasma volcanium (strain ATCC 51530 / DSM 4299 / JCM 9571 / NBRC 15438 / GSS1).